A 720-amino-acid chain; its full sequence is Phosphoribosylformylglycinamidine synthase subunit PurL (720 aa).

Histidine 47 is a catalytic residue. ATP contacts are provided by tyrosine 50 and lysine 89. Glutamate 91 is a Mg(2+) binding site. Residues 92–95 and arginine 114 contribute to the substrate site; that span reads SHNH. The active-site Proton acceptor is histidine 93. Mg(2+) is bound at residue aspartate 115. Glutamine 238 provides a ligand contact to substrate. Aspartate 266 contacts Mg(2+). 310–312 provides a ligand contact to substrate; the sequence is ESQ. 2 residues coordinate ATP: aspartate 488 and glycine 525. Residue asparagine 526 participates in Mg(2+) binding. Serine 528 provides a ligand contact to substrate.

The protein belongs to the FGAMS family. In terms of assembly, monomer. Part of the FGAM synthase complex composed of 1 PurL, 1 PurQ and 2 PurS subunits.

The protein localises to the cytoplasm. The catalysed reaction is N(2)-formyl-N(1)-(5-phospho-beta-D-ribosyl)glycinamide + L-glutamine + ATP + H2O = 2-formamido-N(1)-(5-O-phospho-beta-D-ribosyl)acetamidine + L-glutamate + ADP + phosphate + H(+). It participates in purine metabolism; IMP biosynthesis via de novo pathway; 5-amino-1-(5-phospho-D-ribosyl)imidazole from N(2)-formyl-N(1)-(5-phospho-D-ribosyl)glycinamide: step 1/2. Part of the phosphoribosylformylglycinamidine synthase complex involved in the purines biosynthetic pathway. Catalyzes the ATP-dependent conversion of formylglycinamide ribonucleotide (FGAR) and glutamine to yield formylglycinamidine ribonucleotide (FGAM) and glutamate. The FGAM synthase complex is composed of three subunits. PurQ produces an ammonia molecule by converting glutamine to glutamate. PurL transfers the ammonia molecule to FGAR to form FGAM in an ATP-dependent manner. PurS interacts with PurQ and PurL and is thought to assist in the transfer of the ammonia molecule from PurQ to PurL. This is Phosphoribosylformylglycinamidine synthase subunit PurL from Cereibacter sphaeroides (strain ATCC 17023 / DSM 158 / JCM 6121 / CCUG 31486 / LMG 2827 / NBRC 12203 / NCIMB 8253 / ATH 2.4.1.) (Rhodobacter sphaeroides).